The sequence spans 427 residues: Serine hydroxymethyltransferase (427 aa).

Residue 120-122 coordinates (6S)-5,6,7,8-tetrahydrofolate; that stretch reads GHI. An N6-(pyridoxal phosphate)lysine modification is found at Lys226. Glu243 lines the (6S)-5,6,7,8-tetrahydrofolate pocket.

The protein belongs to the SHMT family. In terms of assembly, homodimer. Pyridoxal 5'-phosphate is required as a cofactor.

It localises to the cytoplasm. Its pathway is amino-acid biosynthesis; glycine biosynthesis; glycine from L-serine: step 1/1. Functionally, catalyzes the reversible interconversion of serine and glycine with a modified folate serving as the one-carbon carrier. Also exhibits a pteridine-independent aldolase activity toward beta-hydroxyamino acids, producing glycine and aldehydes, via a retro-aldol mechanism. The chain is Serine hydroxymethyltransferase from Thermococcus gammatolerans (strain DSM 15229 / JCM 11827 / EJ3).